A 33-amino-acid chain; its full sequence is Pardaxin P-5 (33 aa).

Belongs to the pardaxin family. Monomer. In aqueous solution exists as a tetramer.

Its subcellular location is the secreted. The protein localises to the target cell membrane. Functionally, exhibits unusual shark repellent and surfactant properties. Forms voltage-dependent, ion-permeable channels in membranes. At high concentration causes cell membrane lysis. The polypeptide is Pardaxin P-5 (Pardachirus marmoratus (Finless sole)).